A 611-amino-acid chain; its full sequence is DNA-directed RNA polymerase subunit Rpo2C (611 aa).

Zn(2+) is bound by residues C547, C550, C565, and C568.

The protein belongs to the RNA polymerase beta chain family. In terms of assembly, part of the RNA polymerase complex. Zn(2+) serves as cofactor.

It is found in the cytoplasm. The enzyme catalyses RNA(n) + a ribonucleoside 5'-triphosphate = RNA(n+1) + diphosphate. Its function is as follows. DNA-dependent RNA polymerase (RNAP) catalyzes the transcription of DNA into RNA using the four ribonucleoside triphosphates as substrates. The Rpo2 subunit (Rpo2N and Rpo2C in this organism) is implicated in DNA promoter recognition and in nucleotide binding. The protein is DNA-directed RNA polymerase subunit Rpo2C of Methanococcus vannielii (strain ATCC 35089 / DSM 1224 / JCM 13029 / OCM 148 / SB).